Consider the following 471-residue polypeptide: Lincomycin resistance protein LmrB (471 aa).

A run of 13 helical transmembrane segments spans residues 15-34, 55-77, 82-104, 111-131, 141-163, 170-187, 202-224, 231-253, 268-290, 297-319, 329-351, 358-380, and 445-467; these read PIIA…ETAL, LTTG…LQWF, LFFT…PTFA, VVQA…ILLI, MGMI…GLIL, WIFW…LFGM, DILS…SSAG, ATVL…RQLT, MFTL…MILL, SLAL…NGLM, AYGP…FFLT, SALT…MMPA, and GIQN…SLFI.

Belongs to the major facilitator superfamily. EmrB family.

The protein resides in the cell membrane. Functionally, proton-dependent transporter. May mediate the efflux of lincomycin. The chain is Lincomycin resistance protein LmrB (lmrB) from Listeria innocua serovar 6a (strain ATCC BAA-680 / CLIP 11262).